The following is a 247-amino-acid chain: Small ribosomal subunit protein uS3 (247 aa).

Residues 39–111 (IYDFFDKKVR…NISIQVIELK (73 aa)) form the KH type-2 domain. A disordered region spans residues 221–247 (EEMDLLNAPKDRRVRRGGERHASTKKN). Basic and acidic residues predominate over residues 236–247 (RGGERHASTKKN).

This sequence belongs to the universal ribosomal protein uS3 family. As to quaternary structure, part of the 30S ribosomal subunit. Forms a tight complex with proteins S10 and S14.

In terms of biological role, binds the lower part of the 30S subunit head. Binds mRNA in the 70S ribosome, positioning it for translation. This is Small ribosomal subunit protein uS3 from Metamycoplasma arthritidis (strain 158L3-1) (Mycoplasma arthritidis).